Reading from the N-terminus, the 414-residue chain is MSELLEKAERLKTASQTLAMLSAEEKNEALEQIAQTLDRERAFILQENEKDMAQGREQGLSPALLDRLQLTNERLDQIIDGVRQVASLPDPVGEIIAEWTRPNGLRIQTVRVPLGVIGMVYEARPNVTVDAASLCLKTGNAVLLRGSTSALHSNKALVAVMKEALRTTAIPETAIELLEDTSRETAQRMFRLNNYLDVLIPRGGAGLIRSVVENATVPVLETGVGNCHIFVDESAERQMAIEIVLNAKLQRPSVCNAVETVLIHERWPYAADLLETLHARGVELRGDQRLASAYPFISEATEDDWYTEYLAPILAVKLVADVDEAIGHIRRYGTKHSEAIITENEVNVRRFFQAVDAAVLYHNASTRFTDGEQFGYGAEIGISTQKLHARGPMGLVAITTTKSLVYGTGQIRTV.

This sequence belongs to the gamma-glutamyl phosphate reductase family.

The protein localises to the cytoplasm. The enzyme catalyses L-glutamate 5-semialdehyde + phosphate + NADP(+) = L-glutamyl 5-phosphate + NADPH + H(+). The protein operates within amino-acid biosynthesis; L-proline biosynthesis; L-glutamate 5-semialdehyde from L-glutamate: step 2/2. Its function is as follows. Catalyzes the NADPH-dependent reduction of L-glutamate 5-phosphate into L-glutamate 5-semialdehyde and phosphate. The product spontaneously undergoes cyclization to form 1-pyrroline-5-carboxylate. The chain is Gamma-glutamyl phosphate reductase from Geobacillus kaustophilus (strain HTA426).